The chain runs to 1073 residues: Ring-infected erythrocyte surface antigen (1073 aa).

The first 65 residues, 1-65 (MRPFHAYSWI…IIGILYIILN (65 aa)), serve as a signal peptide directing secretion. Asparagine 71 is a glycosylation site (N-linked (GlcNAc...) asparagine). Residues 428–444 (DTSEEESVEENEEEHTV) show a composition bias toward acidic residues. Residues 428-514 (DTSEEESVEE…SDVQQTSEAA (87 aa)) form a disordered region. Positions 436–504 (EENEEEHTVD…VAEEHVEEPA (69 aa)) are tandem repeats 1. Positions 445 to 456 (DDEHVEEHTADD) are enriched in basic and acidic residues. Residues 457-470 (EHVEEPTVADDEHV) are compositionally biased toward acidic residues. Basic and acidic residues predominate over residues 476–502 (ADEHVEEPTVAEEHVEEPTVAEEHVEE). One can recognise a J domain in the interval 521 to 589 (DTLYYDILGV…KRWYNKYGYD (69 aa)). N-linked (GlcNAc...) asparagine glycans are attached at residues asparagine 639, asparagine 773, and asparagine 777. The tract at residues 891 to 1073 (NAEENVEHDA…VEEHNEEYDE (183 aa)) is tandem repeats 2. Over residues 894-930 (ENVEHDAEENVEHDAEENVEHDAEENVEHDAEENVEH) the composition is skewed to basic and acidic residues. The segment at 894–1073 (ENVEHDAEEN…VEEHNEEYDE (180 aa)) is disordered. A compositionally biased stretch (acidic residues) spans 931 to 1073 (DAEENVEENV…VEEHNEEYDE (143 aa)).

In terms of processing, the Tyr residues in the variant tetrameric sequences in the RESA repeat are possibly phosphorylated (by homology with band 3).

The protein localises to the cell membrane. Functionally, may disrupt the normal intermolecular interactions of the cytoplasmic domain of band 3 and thereby facilitate the invagination of the red cell membrane which is necessary for the formation of the parasitophorous vacuole. This is Ring-infected erythrocyte surface antigen (RESA) from Plasmodium falciparum (isolate FC27 / Papua New Guinea).